Reading from the N-terminus, the 240-residue chain is Uridylate kinase (240 aa).

13 to 16 is an ATP binding site; that stretch reads KASG. Glycine 55 provides a ligand contact to UMP. ATP is bound by residues glycine 56 and arginine 60. UMP is bound by residues aspartate 75 and 136–143; that span reads TGNPFFTT. Threonine 163, glutamine 164, tyrosine 169, and aspartate 172 together coordinate ATP.

This sequence belongs to the UMP kinase family. In terms of assembly, homohexamer.

Its subcellular location is the cytoplasm. It catalyses the reaction UMP + ATP = UDP + ADP. The protein operates within pyrimidine metabolism; CTP biosynthesis via de novo pathway; UDP from UMP (UMPK route): step 1/1. Inhibited by UTP. Its function is as follows. Catalyzes the reversible phosphorylation of UMP to UDP. This chain is Uridylate kinase, found in Mesorhizobium japonicum (strain LMG 29417 / CECT 9101 / MAFF 303099) (Mesorhizobium loti (strain MAFF 303099)).